The primary structure comprises 184 residues: Peptidyl-tRNA hydrolase (184 aa).

Tyrosine 14 serves as a coordination point for tRNA. Histidine 19 acts as the Proton acceptor in catalysis. TRNA contacts are provided by phenylalanine 64, asparagine 66, and asparagine 112.

This sequence belongs to the PTH family. In terms of assembly, monomer.

Its subcellular location is the cytoplasm. It catalyses the reaction an N-acyl-L-alpha-aminoacyl-tRNA + H2O = an N-acyl-L-amino acid + a tRNA + H(+). In terms of biological role, hydrolyzes ribosome-free peptidyl-tRNAs (with 1 or more amino acids incorporated), which drop off the ribosome during protein synthesis, or as a result of ribosome stalling. Its function is as follows. Catalyzes the release of premature peptidyl moieties from peptidyl-tRNA molecules trapped in stalled 50S ribosomal subunits, and thus maintains levels of free tRNAs and 50S ribosomes. This Thermoanaerobacter sp. (strain X514) protein is Peptidyl-tRNA hydrolase.